Consider the following 464-residue polypeptide: Serine--tRNA synthetase-like protein Slimp (464 aa).

Belongs to the class-II aminoacyl-tRNA synthetase family. Type-1 seryl-tRNA synthetase subfamily.

It is found in the mitochondrion. Functionally, essential protein which may play a role in mitochondrial morphogenesis and function. Has transfer RNA (tRNA)-binding activity and can bind tRNA(Ser) but does not have serine--tRNA ligase activity and does not bind ATP. The protein is Serine--tRNA synthetase-like protein Slimp of Drosophila melanogaster (Fruit fly).